A 373-amino-acid polypeptide reads, in one-letter code: Erythronate-4-phosphate dehydrogenase (373 aa).

2 residues coordinate substrate: Ser-45 and Thr-66. NAD(+) contacts are provided by Asp-146 and Thr-173. Arg-206 is a catalytic residue. Asp-230 lines the NAD(+) pocket. Glu-235 is a catalytic residue. Residue His-252 is the Proton donor of the active site. Gly-255 lines the NAD(+) pocket. Tyr-256 provides a ligand contact to substrate.

The protein belongs to the D-isomer specific 2-hydroxyacid dehydrogenase family. PdxB subfamily. In terms of assembly, homodimer.

The protein resides in the cytoplasm. It catalyses the reaction 4-phospho-D-erythronate + NAD(+) = (R)-3-hydroxy-2-oxo-4-phosphooxybutanoate + NADH + H(+). It functions in the pathway cofactor biosynthesis; pyridoxine 5'-phosphate biosynthesis; pyridoxine 5'-phosphate from D-erythrose 4-phosphate: step 2/5. Functionally, catalyzes the oxidation of erythronate-4-phosphate to 3-hydroxy-2-oxo-4-phosphonooxybutanoate. The sequence is that of Erythronate-4-phosphate dehydrogenase from Saccharophagus degradans (strain 2-40 / ATCC 43961 / DSM 17024).